The sequence spans 757 residues: uncharacterized protein (757 aa).

This is an uncharacterized protein from Dictyostelium discoideum (Social amoeba).